The primary structure comprises 430 residues: tRNA(Ile)-lysidine synthase (430 aa).

ATP is bound at residue 21 to 26 (SGGLDS).

Belongs to the tRNA(Ile)-lysidine synthase family.

Its subcellular location is the cytoplasm. The catalysed reaction is cytidine(34) in tRNA(Ile2) + L-lysine + ATP = lysidine(34) in tRNA(Ile2) + AMP + diphosphate + H(+). Ligates lysine onto the cytidine present at position 34 of the AUA codon-specific tRNA(Ile) that contains the anticodon CAU, in an ATP-dependent manner. Cytidine is converted to lysidine, thus changing the amino acid specificity of the tRNA from methionine to isoleucine. The polypeptide is tRNA(Ile)-lysidine synthase (Salmonella typhimurium (strain LT2 / SGSC1412 / ATCC 700720)).